The following is a 72-amino-acid chain: Sperm protein associated with the nucleus on the X chromosome N1 (72 aa).

Residues 1-44 form a disordered region; it reads MEQPTSSINGEKRKSPCESNNENDEMQETPNRDLAPEPSLKKMK.

The protein belongs to the SPAN-X family.

The polypeptide is Sperm protein associated with the nucleus on the X chromosome N1 (SPANXN1) (Homo sapiens (Human)).